The sequence spans 238 residues: Transcriptional activator protein AnoR (238 aa).

Positions 170–236 (EFSQFNLYLT…SAAIRAVMLG (67 aa)) constitute an HTH luxR-type domain. The H-T-H motif DNA-binding region spans 195-214 (SAEIAQIIGVTERTVNFHLC).

This sequence belongs to the autoinducer-regulated transcriptional regulatory protein family.

Its function is as follows. Positively regulates the expression of anoI. Required for biofilm formation and motility. Probably part of a quorum-sensing system with AnoI. This chain is Transcriptional activator protein AnoR, found in Acinetobacter nosocomialis.